We begin with the raw amino-acid sequence, 130 residues long: Fluoride-specific ion channel FluC (130 aa).

Transmembrane regions (helical) follow at residues 4 to 24, 35 to 55, 68 to 88, and 99 to 119; these read MINV…RYFI, GFPI…GLLT, LNLF…TFSL, and AVFG…GVVL. Residues Gly78 and Thr81 each contribute to the Na(+) site.

The protein belongs to the fluoride channel Fluc/FEX (TC 1.A.43) family.

Its subcellular location is the cell membrane. The catalysed reaction is fluoride(in) = fluoride(out). Na(+) is not transported, but it plays an essential structural role and its presence is essential for fluoride channel function. Fluoride-specific ion channel. Important for reducing fluoride concentration in the cell, thus reducing its toxicity. This chain is Fluoride-specific ion channel FluC, found in Ruminiclostridium cellulolyticum (strain ATCC 35319 / DSM 5812 / JCM 6584 / H10) (Clostridium cellulolyticum).